Here is a 114-residue protein sequence, read N- to C-terminus: UPF0342 protein OEOE_0901 (114 aa).

This sequence belongs to the UPF0342 family.

The polypeptide is UPF0342 protein OEOE_0901 (Oenococcus oeni (strain ATCC BAA-331 / PSU-1)).